We begin with the raw amino-acid sequence, 254 residues long: 4-hydroxy-tetrahydrodipicolinate reductase (254 aa).

Position 13-18 (13-18 (GAAGRM)) interacts with NAD(+). R39 is an NADP(+) binding site. Residues 86-88 (GTT) and 110-113 (AANT) each bind NAD(+). The active-site Proton donor/acceptor is the H143. H144 lines the (S)-2,3,4,5-tetrahydrodipicolinate pocket. K147 (proton donor) is an active-site residue. 153 to 154 (GT) serves as a coordination point for (S)-2,3,4,5-tetrahydrodipicolinate.

Belongs to the DapB family.

Its subcellular location is the cytoplasm. The catalysed reaction is (S)-2,3,4,5-tetrahydrodipicolinate + NAD(+) + H2O = (2S,4S)-4-hydroxy-2,3,4,5-tetrahydrodipicolinate + NADH + H(+). It catalyses the reaction (S)-2,3,4,5-tetrahydrodipicolinate + NADP(+) + H2O = (2S,4S)-4-hydroxy-2,3,4,5-tetrahydrodipicolinate + NADPH + H(+). It functions in the pathway amino-acid biosynthesis; L-lysine biosynthesis via DAP pathway; (S)-tetrahydrodipicolinate from L-aspartate: step 4/4. Functionally, catalyzes the conversion of 4-hydroxy-tetrahydrodipicolinate (HTPA) to tetrahydrodipicolinate. This Zymomonas mobilis subsp. mobilis (strain ATCC 31821 / ZM4 / CP4) protein is 4-hydroxy-tetrahydrodipicolinate reductase.